A 425-amino-acid polypeptide reads, in one-letter code: Pleckstrin homology domain-containing family A member 2 (425 aa).

The 107-residue stretch at 7 to 113 folds into the PH 1 domain; sequence QNRICGFLDI…WVEALNQASK (107 aa). A Glycyl lysine isopeptide (Lys-Gly) (interchain with G-Cter in SUMO2) cross-link involves residue Lys-141. At Ser-184 the chain carries Phosphoserine. Residues 198–298 enclose the PH 2 domain; it reads PLIKSGYCVK…WIKEIGAAVQ (101 aa). Over residues 312 to 330 the composition is skewed to low complexity; it reads SISLTRPGSSSLSSGPNSI. The disordered stretch occupies residues 312 to 332; that stretch reads SISLTRPGSSSLSSGPNSILC. Phosphoserine is present on residues Ser-314 and Ser-349. The interval 352–425 is disordered; the sequence is SSWQPWTPVP…DDENIRTSDV (74 aa). The span at 400–410 shows a compositional bias: basic and acidic residues; that stretch reads RSEPQHPKEKP.

Binds MPDZ and PTPN13. In terms of tissue distribution, highly expressed in heart, kidney, spleen and peripheral blood leukocytes. Detected at lower levels in brain, skeletal muscle, colon, thymus, liver, small intestine, placenta and lung.

The protein resides in the cytoplasm. The protein localises to the cell membrane. It localises to the nucleus. Functionally, binds specifically to phosphatidylinositol 3,4-diphosphate (PtdIns3,4P2), but not to other phosphoinositides. May recruit other proteins to the plasma membrane. The chain is Pleckstrin homology domain-containing family A member 2 (PLEKHA2) from Homo sapiens (Human).